The following is a 318-amino-acid chain: Nucleotide-binding protein Lcho_3490 (318 aa).

An ATP-binding site is contributed by 35–42 (GISGGGKS). 84-87 (DVRN) contacts GTP.

The protein belongs to the RapZ-like family.

Displays ATPase and GTPase activities. The polypeptide is Nucleotide-binding protein Lcho_3490 (Leptothrix cholodnii (strain ATCC 51168 / LMG 8142 / SP-6) (Leptothrix discophora (strain SP-6))).